Consider the following 397-residue polypeptide: Phosphoglycerate kinase (397 aa).

Residues 25 to 27 (DLN), R41, 64 to 67 (HLGR), R118, and R151 each bind substrate. ATP contacts are provided by residues K202, E324, and 350 to 353 (GGDT).

This sequence belongs to the phosphoglycerate kinase family. In terms of assembly, monomer.

It localises to the cytoplasm. It catalyses the reaction (2R)-3-phosphoglycerate + ATP = (2R)-3-phospho-glyceroyl phosphate + ADP. It participates in carbohydrate degradation; glycolysis; pyruvate from D-glyceraldehyde 3-phosphate: step 2/5. The protein is Phosphoglycerate kinase of Albidiferax ferrireducens (strain ATCC BAA-621 / DSM 15236 / T118) (Rhodoferax ferrireducens).